The primary structure comprises 255 residues: Thiazole synthase (255 aa).

The active-site Schiff-base intermediate with DXP is lysine 96. Residues glycine 157, alanine 183–glycine 184, and asparagine 205–threonine 206 each bind 1-deoxy-D-xylulose 5-phosphate.

It belongs to the ThiG family. As to quaternary structure, homotetramer. Forms heterodimers with either ThiH or ThiS.

It is found in the cytoplasm. The enzyme catalyses [ThiS sulfur-carrier protein]-C-terminal-Gly-aminoethanethioate + 2-iminoacetate + 1-deoxy-D-xylulose 5-phosphate = [ThiS sulfur-carrier protein]-C-terminal Gly-Gly + 2-[(2R,5Z)-2-carboxy-4-methylthiazol-5(2H)-ylidene]ethyl phosphate + 2 H2O + H(+). It functions in the pathway cofactor biosynthesis; thiamine diphosphate biosynthesis. Its function is as follows. Catalyzes the rearrangement of 1-deoxy-D-xylulose 5-phosphate (DXP) to produce the thiazole phosphate moiety of thiamine. Sulfur is provided by the thiocarboxylate moiety of the carrier protein ThiS. In vitro, sulfur can be provided by H(2)S. In Anoxybacillus flavithermus (strain DSM 21510 / WK1), this protein is Thiazole synthase.